Consider the following 427-residue polypeptide: BTB/POZ domain-containing protein KCTD16 (427 aa).

In terms of domain architecture, BTB spans 25–98; it reads EVIELNVGGQ…LRDRQVVLPD (74 aa). Tyr112 is modified (phosphotyrosine). Ser130, Ser137, Ser143, and Ser146 each carry phosphoserine.

Homopentamer; forms an open pentamer. In contrast to other BTB domain-containing proteins, does not interact with CUL3. Interacts as a tetramer with GABBR1 and GABBR2. As to expression, expressed in the brain, mainly in the hippocampus.

The protein resides in the presynaptic cell membrane. It is found in the postsynaptic cell membrane. Auxiliary subunit of GABA-B receptors that determine the pharmacology and kinetics of the receptor response. Increases agonist potency and markedly alter the G-protein signaling of the receptors by accelerating onset and promoting desensitization. This is BTB/POZ domain-containing protein KCTD16 (Kctd16) from Mus musculus (Mouse).